The sequence spans 124 residues: Small ribosomal subunit protein uS12 (124 aa).

The residue at position 89 (Asp89) is a 3-methylthioaspartic acid.

The protein belongs to the universal ribosomal protein uS12 family. In terms of assembly, part of the 30S ribosomal subunit. Contacts proteins S8 and S17. May interact with IF1 in the 30S initiation complex.

In terms of biological role, with S4 and S5 plays an important role in translational accuracy. Interacts with and stabilizes bases of the 16S rRNA that are involved in tRNA selection in the A site and with the mRNA backbone. Located at the interface of the 30S and 50S subunits, it traverses the body of the 30S subunit contacting proteins on the other side and probably holding the rRNA structure together. The combined cluster of proteins S8, S12 and S17 appears to hold together the shoulder and platform of the 30S subunit. This chain is Small ribosomal subunit protein uS12, found in Nitratiruptor sp. (strain SB155-2).